We begin with the raw amino-acid sequence, 24 residues long: Brevinin-1SPc (24 aa).

C18 and C24 form a disulfide bridge.

As to expression, expressed by the skin glands.

It is found in the secreted. Its function is as follows. Antimicrobial peptide with activity against Gram-negative and Gram-positive bacteria and fungi. Also shows hemolytic activity. This is Brevinin-1SPc from Lithobates septentrionalis (Mink frog).